The primary structure comprises 548 residues: pH-responsive protein 1 (548 aa).

An N-terminal signal peptide occupies residues 1–20 (MYSLIKSLATFATLFSLTLA). An N-linked (GlcNAc...) asparagine glycan is attached at asparagine 41. Cysteine 82 and cysteine 111 form a disulfide bridge. Asparagine 173 and asparagine 261 each carry an N-linked (GlcNAc...) asparagine glycan. 5 disulfide bridges follow: cysteine 224/cysteine 358, cysteine 242/cysteine 273, cysteine 381/cysteine 432, cysteine 390/cysteine 456, and cysteine 409/cysteine 414. Residues 483-518 (GKASSSGGSSKSGSSSASASGSSSSSTSSGSSSSSG) are disordered. Residue serine 517 is the site of GPI-anchor amidated serine attachment. Residues 518 to 548 (GVKATQQMSMVKLVSIITIVTAFVGGMSVVF) constitute a propeptide, removed in mature form.

This sequence belongs to the glycosyl hydrolase 72 family.

The protein localises to the cell membrane. Required for apical cell growth and plays an essential role in morphogenesis. May be integral to the pathogenic ability of the organism. This Candida albicans (strain SC5314 / ATCC MYA-2876) (Yeast) protein is pH-responsive protein 1 (PHR1).